Here is a 33-residue protein sequence, read N- to C-terminus: Brevinin-2PTd (33 aa).

A disulfide bond links C27 and C33.

As to expression, expressed by the skin glands.

It is found in the secreted. In terms of biological role, has antibacterial activity against the Gram-positive bacterium S.aureus ATCC 25923 and the Gram-negative bacterium E.coli ATCC 25726. This Pulchrana picturata (Malaysian fire frog) protein is Brevinin-2PTd.